The chain runs to 473 residues: Mitochondrial adenyl nucleotide antiporter SLC25A24-A (473 aa).

Residues 1–173 (MLEQVQKFLL…RFWKHSTVLD (173 aa)) are regulatory N-terminal domain. Over 1 to 197 (MLEQVQKFLL…EKKTGQWWKH (197 aa)) the chain is Mitochondrial intermembrane. EF-hand domains follow at residues 19-54 (DSHT…MGMA), 55-88 (VGKG…EEHE), 86-121 (EHEK…LGIN), and 122-157 (ISLD…NPAD). Positions 32, 34, 36, 38, 43, 68, 70, 72, 74, 79, 99, 101, 103, 105, 110, 135, 137, 139, 141, and 146 each coordinate Ca(2+). The segment at 159–168 (IQQIIRFWKH) is linker region. Residues 174 to 473 (IGDSLTIPDE…YEKMKIQLGI (300 aa)) are C-terminal transmembrane transporter domain. Solcar repeat units follow at residues 192 to 277 (GQWW…YKKL), 285 to 370 (LGTA…LKNY), and 382 to 470 (PGVL…MKIQ). The chain crosses the membrane as a helical span at residues 198-215 (LLAGGMAGAVSRTGTAPL). Topologically, residues 216–251 (DRLKVMMQVHGTKGNSNIITGLKQMVKEGGVRSLWR) are mitochondrial matrix. The helical transmembrane segment at 252 to 271 (GNGVNVIKIAPETAMKFWAY) threads the bilayer. The Mitochondrial intermembrane segment spans residues 272–294 (EQYKKLFTSESGKLGTAERFIAG). The helical transmembrane segment at 295-308 (SLAGATAQTSIYPM) threads the bilayer. The Mitochondrial matrix segment spans residues 309 to 344 (EVLKTRLAVGKTGQYSGMFDCAKKIMQKEGILAFYK). The chain crosses the membrane as a helical span at residues 345 to 364 (GYIPNILGIIPYAGIDLAIY). The Mitochondrial intermembrane segment spans residues 365–387 (ETLKNYWLQNYAKDSANPGVLVL). A helical membrane pass occupies residues 388–405 (LGCGTVSSTCGQLASYPL). Residues 406–444 (ALIRTRMQAQASIEGAPQLNMGGLFRKIVAKEGFFGLYT) lie on the Mitochondrial matrix side of the membrane. The helical transmembrane segment at 445-464 (GIAPNFLKVLPAVSISYVVY) threads the bilayer. Over 465–473 (EKMKIQLGI) the chain is Mitochondrial intermembrane.

This sequence belongs to the mitochondrial carrier (TC 2.A.29) family. Monomer.

The protein resides in the mitochondrion inner membrane. It carries out the reaction Mg(2+)(out) + phosphate(in) + ATP(out) = Mg(2+)(in) + phosphate(out) + ATP(in). The catalysed reaction is ADP(out) + phosphate(in) + H(+)(out) = ADP(in) + phosphate(out) + H(+)(in). It catalyses the reaction AMP(out) + phosphate(in) = AMP(in) + phosphate(out). The enzyme catalyses phosphate(in) + ATP(out) + 2 H(+)(out) = phosphate(out) + ATP(in) + 2 H(+)(in). It carries out the reaction dADP(in) + ADP(out) = dADP(out) + ADP(in). The catalysed reaction is Mg(2+)(in) + ADP(out) + ATP(in) + H(+)(out) = Mg(2+)(out) + ADP(in) + ATP(out) + H(+)(in). It catalyses the reaction ADP(out) + diphosphate(in) = ADP(in) + diphosphate(out). The enzyme catalyses dAMP(in) + ADP(out) + H(+)(out) = dAMP(out) + ADP(in) + H(+)(in). It carries out the reaction 3'-AMP(in) + ADP(out) + H(+)(out) = 3'-AMP(out) + ADP(in) + H(+)(in). The catalysed reaction is dAMP(out) + phosphate(in) = dAMP(in) + phosphate(out). It catalyses the reaction 3'-AMP(out) + phosphate(in) = 3'-AMP(in) + phosphate(out). The enzyme catalyses dADP(out) + phosphate(in) + H(+)(out) = dADP(in) + phosphate(out) + H(+)(in). Activated by an increase in cytosolic calcium levels that induce a conformational change of the N-terminal regulatory domain, uncapping the channel and allowing transport. Inhibited by bathophenanthroline, mersalyl, p-hydroxymercuribenzoate, bromcresol purple and tannic acid. Electroneutral antiporter that mediates the transport of adenyl nucleotides through the inner mitochondrial membrane. Originally identified as an ATP-magnesium/inorganic phosphate antiporter, it also acts as a broad specificity adenyl nucleotide antiporter. By regulating the mitochondrial matrix adenyl nucleotide pool could adapt to changing cellular energetic demands and indirectly regulate adenyl nucleotide-dependent metabolic pathways. The polypeptide is Mitochondrial adenyl nucleotide antiporter SLC25A24-A (slc25a24-a) (Xenopus laevis (African clawed frog)).